Reading from the N-terminus, the 339-residue chain is Heat-inducible transcription repressor HrcA (339 aa).

It belongs to the HrcA family.

In terms of biological role, negative regulator of class I heat shock genes (grpE-dnaK-dnaJ and groELS operons). Prevents heat-shock induction of these operons. This is Heat-inducible transcription repressor HrcA from Paraburkholderia phymatum (strain DSM 17167 / CIP 108236 / LMG 21445 / STM815) (Burkholderia phymatum).